A 154-amino-acid polypeptide reads, in one-letter code: Superoxide dismutase [Cu-Zn] (154 aa).

The Cu cation site is built by H47, H49, and H64. C58 and C147 are oxidised to a cystine. Zn(2+) is bound by residues H64, H72, H81, and D84. Residue H121 participates in Cu cation binding. The segment covering 125–136 has biased composition (basic and acidic residues); that stretch reads DDLGKGGNEESL. The segment at 125–144 is disordered; it reads DDLGKGGNEESLKTGNAGPR. R144 contributes to the substrate binding site.

Belongs to the Cu-Zn superoxide dismutase family. In terms of assembly, homodimer. It depends on Cu cation as a cofactor. Zn(2+) serves as cofactor.

The protein localises to the cytoplasm. It catalyses the reaction 2 superoxide + 2 H(+) = H2O2 + O2. In terms of biological role, destroys radicals which are normally produced within the cells and which are toxic to biological systems. This is Superoxide dismutase [Cu-Zn] (SOD1) from Cordyceps tenuipes (Entomopathogenic fungus).